Here is a 241-residue protein sequence, read N- to C-terminus: 2-C-methyl-D-erythritol 4-phosphate cytidylyltransferase (241 aa).

The protein belongs to the IspD/TarI cytidylyltransferase family. IspD subfamily. As to quaternary structure, homodimer.

The catalysed reaction is 2-C-methyl-D-erythritol 4-phosphate + CTP + H(+) = 4-CDP-2-C-methyl-D-erythritol + diphosphate. Its pathway is isoprenoid biosynthesis; isopentenyl diphosphate biosynthesis via DXP pathway; isopentenyl diphosphate from 1-deoxy-D-xylulose 5-phosphate: step 2/6. Functionally, catalyzes the formation of 4-diphosphocytidyl-2-C-methyl-D-erythritol from CTP and 2-C-methyl-D-erythritol 4-phosphate (MEP). The protein is 2-C-methyl-D-erythritol 4-phosphate cytidylyltransferase of Yersinia pestis.